The following is a 140-amino-acid chain: Cytochrome c oxidase subunit 6, mitochondrial (140 aa).

It belongs to the cytochrome c oxidase subunit 5A family. As to quaternary structure, component of the cytochrome c oxidase (complex IV, CIV), a multisubunit enzyme composed of a catalytic core of 3 subunits and several supernumerary subunits. The complex exists as a monomer or a dimer and forms supercomplexes (SCs) in the inner mitochondrial membrane with ubiquinol-cytochrome c oxidoreductase (cytochrome b-c1 complex, complex III, CIII).

It is found in the mitochondrion inner membrane. It participates in energy metabolism; oxidative phosphorylation. In terms of biological role, component of the cytochrome c oxidase, the last enzyme in the mitochondrial electron transport chain which drives oxidative phosphorylation. The respiratory chain contains 3 multisubunit complexes succinate dehydrogenase (complex II, CII), ubiquinol-cytochrome c oxidoreductase (cytochrome b-c1 complex, complex III, CIII) and cytochrome c oxidase (complex IV, CIV), that cooperate to transfer electrons derived from NADH and succinate to molecular oxygen, creating an electrochemical gradient over the inner membrane that drives transmembrane transport and the ATP synthase. Cytochrome c oxidase is the component of the respiratory chain that catalyzes the reduction of oxygen to water. Electrons originating from reduced cytochrome c in the intermembrane space (IMS) are transferred via the dinuclear copper A center (CU(A)) of subunit 2 and heme A of subunit 1 to the active site in subunit 1, a binuclear center (BNC) formed by heme A3 and copper B (CU(B)). The BNC reduces molecular oxygen to 2 water molecules using 4 electrons from cytochrome c in the IMS and 4 protons from the mitochondrial matrix. In Schizosaccharomyces pombe (strain 972 / ATCC 24843) (Fission yeast), this protein is Cytochrome c oxidase subunit 6, mitochondrial (cox6).